Reading from the N-terminus, the 258-residue chain is MIPPADSLLKYDTPVLVSRNTEKRSPKARLLKVSPQQPGPSGSAPQPPKTKLPSTPCVPDPTKQAEEILNAILPPREWVEDTQLWIQQVSSTPSTRMDVVHLQEQLDLKLQQRQARETGICPVRRELYSQCFDELIREVTINCAERGLLLLRVRDEIRMTIAAYQTLYESSVAFGMRKALQAEQGKSDMERKIAELETEKRDLERQVNEQKAKCEATEKRESERRQVEEKKHNEEIQFLKRTNQQLKAQLEGIIAPKK.

Disordered regions lie at residues 1–60 (MIPP…CVPD) and 207–231 (VNEQ…EEKK). Residues 34-44 (SPQQPGPSGSA) show a composition bias toward low complexity. Residues 176–255 (MRKALQAEQG…LKAQLEGIIA (80 aa)) adopt a coiled-coil conformation.

It belongs to the inner dynein arm light chain family. In terms of assembly, interacts with CFAP45. Interacts with DYNC1H1. As to expression, expressed in many tissues. A smaller 0.9 kb and a larger 2.5 kb transcripts were detected at the highest level in the testis, at medium levels in the prostate, heart, liver, lung and pancreas, at low levels in the ovary, skeletal muscle and small intestine. Not detected in spleen, colon epithelium, thymus or peripheral blood leukocytes. The 0.9 kb transcript is expressed at a 20-fold higher level than the 2.5 kb transcript in the testis. Expressed in spermatozoa and airway epithelial cells (at protein level).

Its subcellular location is the cell projection. It localises to the cilium. It is found in the flagellum. The protein resides in the dynein axonemal particle. The protein localises to the cytoplasm. Involved in sperm flagellum assembly. This Homo sapiens (Human) protein is Axonemal dynein light intermediate polypeptide 1.